We begin with the raw amino-acid sequence, 1085 residues long: MPHFTVVPVDGPRRGDYDNLEGLSWVDYGERAEREDPDGHGNHRESSPFLCPLEASRGSDYYDRNLALFEEELDIRPKVSSLLGKLVSYTNLTQGAKEHEEAESGEGTRRRAAKAPSMGTLMGVYLPCLQNIFGVILFLRLTWMVGTAGVLQALLIVLICCCCTLLTAISMSAIATNGVVPAGGSYFMISRSLGPEFGGAVGLCFYLGTTFAAAMYILGAIEILLTYIAPPAAIFYPSGTHDTSNATLNNMRVYGTVFLSFMTLVVFVGVKYVNKFASLFLACVIISILSIYAGGIKSMFDPPVFPVCMLGNRTLSRDQFDICAKTTMVDNETVATRLWSFFCHSPNLTTDSCDPYFLLNNVTEIPGIPGAAAGVLQENLWSAYLEKGEVVEKRGLPSTDAVGLKENLPLYVVADIATSFTVLVGIFFPSVTGIMAGSNRSGDLRDAQKSIPVGTILAIVTTSLVYFSSVVLFGACIEGVVLRDKYGDGVSRNLVVGTLAWPSPWVIVVGSFFSTCGAGLQSLTGAPRLLQAIAKDNIIPFLRVFGHGKANGEPTWALLLTALIAELGILIASLDMVAPILSMFFLMCYLFVNLACAVQTLLRTPNWRPRFKYYHWALSFLGMSLCLALMFVSSWYYALVAMLIAGMIYKYIEYQGAEKEWGDGIRGLSLSAARYALLRLEEGPPHTKNWRPQLLVLLKLDEDLHVKYPRLLTFASQLKAGKGLTIVGSVIQGSFLESYGEAQAAEQTIKNMMKIEKVKGFCQVVVASKVREGLAHLIQSCGLGGMRHNSVVLGWPYGWRQSEDPRAWKTFIDTVRCTTAAHLALLVPKNIAFYPSNHERYLEGHIDVWWIVHDGGMLMLLPFLLRQHKVWRKCRMRIFTVAQMDDNSIQMKKDLAVFLYHLRLEAEVEVVEMHNSDISAYTYERTLMMEQRSQMLRQMRLTKTEREREAQLVKDRHSALRLESLYSDEEDEAAAGADKIQMTWTRDKYMTEPWDPSHTPDNFRELVHIKPDQSNVRRMHTAVKLNEVIVTRSHDARLVLLNMPGPPKNSEGDENYMEFLEVLTEGLERVLLVRGGGREVITIYS.

Residues 1-119 are Cytoplasmic-facing; that stretch reads MPHFTVVPVD…RRAAKAPSMG (119 aa). Serine 24 carries the post-translational modification Phosphoserine. The span at 28–46 shows a compositional bias: basic and acidic residues; that stretch reads YGERAEREDPDGHGNHRES. The disordered stretch occupies residues 28–47; the sequence is YGERAEREDPDGHGNHRESS. Phosphoserine occurs at positions 47, 59, 81, and 88. The discontinuously helical transmembrane segment at 120–141 threads the bilayer; that stretch reads TLMGVYLPCLQNIFGVILFLRL. Asparagine 131 and isoleucine 132 together coordinate K(+). At 142 to 149 the chain is on the extracellular side; sequence TWMVGTAG. Residues 150–172 traverse the membrane as a helical segment; the sequence is VLQALLIVLICCCCTLLTAISMS. The Cytoplasmic portion of the chain corresponds to 173 to 196; the sequence is AIATNGVVPAGGSYFMISRSLGPE. The chain crosses the membrane as a helical span at residues 197 to 225; sequence FGGAVGLCFYLGTTFAAAMYILGAIEILL. Tyrosine 216 lines the K(+) pocket. At 226–248 the chain is on the extracellular side; sequence TYIAPPAAIFYPSGTHDTSNATL. Asparagine 245 is a glycosylation site (N-linked (GlcNAc...) asparagine). A run of 2 helical transmembrane segments spans residues 249-271 and 272-297; these read NNMRVYGTVFLSFMTLVVFVGVK and YVNKFASLFLACVIISILSIYAGGIK. Topologically, residues 298 to 419 are extracellular; the sequence is SMFDPPVFPV…LYVVADIATS (122 aa). A disulfide bridge connects residues cysteine 308 and cysteine 323. N-linked (GlcNAc...) asparagine glycans are attached at residues asparagine 312, asparagine 331, and asparagine 347. A disulfide bridge links cysteine 343 with cysteine 353. The chain crosses the membrane as a helical span at residues 420–440; sequence FTVLVGIFFPSVTGIMAGSNR. The K(+) site is built by proline 429 and threonine 432. Chloride contacts are provided by glycine 433, isoleucine 434, and methionine 435. Residues 441-450 lie on the Cytoplasmic side of the membrane; it reads SGDLRDAQKS. Residues 451-473 form a helical membrane-spanning segment; it reads IPVGTILAIVTTSLVYFSSVVLF. Residues 474-504 are Extracellular-facing; it reads GACIEGVVLRDKYGDGVSRNLVVGTLAWPSP. Residues 505-531 form a helical membrane-spanning segment; the sequence is WVIVVGSFFSTCGAGLQSLTGAPRLLQ. Over 532 to 554 the chain is Cytoplasmic; sequence AIAKDNIIPFLRVFGHGKANGEP. The next 2 membrane-spanning stretches (helical) occupy residues 555 to 575 and 576 to 598; these read TWALLLTALIAELGILIASLD and MVAPILSMFFLMCYLFVNLACAV. Residue tyrosine 589 coordinates chloride. Over 599–612 the chain is Cytoplasmic; that stretch reads QTLLRTPNWRPRFK. 2 helical membrane-spanning segments follow: residues 613–635 and 636–651; these read YYHWALSFLGMSLCLALMFVSSW and YYALVAMLIAGMIYKY. The Cytoplasmic portion of the chain corresponds to 652–1085; that stretch reads IEYQGAEKEW…GGREVITIYS (434 aa). A scissor helix region spans residues 665-681; sequence IRGLSLSAARYALLRLE. The ATP site is built by leucine 697, lysine 699, lysine 707, tyrosine 708, and valine 730. Serine 734 carries the post-translational modification Phosphoserine. The ATP site is built by glycine 794, tryptophan 795, and tyrosine 797. Serine 916 and serine 967 each carry phosphoserine. Position 983 is a phosphothreonine (threonine 983). Serine 1050 carries the phosphoserine modification.

It belongs to the SLC12A transporter family. K/Cl co-transporter subfamily. As to quaternary structure, homodimer; adopts a domain-swap conformation at the scissor helices connecting the transmembrane domain and C-terminal domain. Heterodimer with other K-Cl cotransporters. In terms of processing, N-glycosylated. Post-translationally, phosphorylated, phosphorylation may regulate transporter activity.

It localises to the cell membrane. The enzyme catalyses K(+)(in) + chloride(in) = K(+)(out) + chloride(out). Its activity is regulated as follows. Inhibited by WNK3. Mediates electroneutral potassium-chloride cotransport when activated by cell swelling. May contribute to cell volume homeostasis in single cells. May be involved in the regulation of basolateral Cl(-) exit in NaCl absorbing epithelia. This chain is Solute carrier family 12 member 4 (SLC12A4), found in Oryctolagus cuniculus (Rabbit).